A 237-amino-acid chain; its full sequence is Ribonuclease PH (237 aa).

Phosphate is bound by residues Arg86 and 124–126 (GTR).

It belongs to the RNase PH family. Homohexameric ring arranged as a trimer of dimers.

The enzyme catalyses tRNA(n+1) + phosphate = tRNA(n) + a ribonucleoside 5'-diphosphate. In terms of biological role, phosphorolytic 3'-5' exoribonuclease that plays an important role in tRNA 3'-end maturation. Removes nucleotide residues following the 3'-CCA terminus of tRNAs; can also add nucleotides to the ends of RNA molecules by using nucleoside diphosphates as substrates, but this may not be physiologically important. Probably plays a role in initiation of 16S rRNA degradation (leading to ribosome degradation) during starvation. In Zymomonas mobilis subsp. mobilis (strain ATCC 31821 / ZM4 / CP4), this protein is Ribonuclease PH.